Reading from the N-terminus, the 205-residue chain is Recombination protein RecR (205 aa).

Residues C60–C75 form a C4-type zinc finger. Positions S83 to S178 constitute a Toprim domain.

This sequence belongs to the RecR family.

Functionally, may play a role in DNA repair. It seems to be involved in an RecBC-independent recombinational process of DNA repair. It may act with RecF and RecO. In Bacteroides fragilis (strain ATCC 25285 / DSM 2151 / CCUG 4856 / JCM 11019 / LMG 10263 / NCTC 9343 / Onslow / VPI 2553 / EN-2), this protein is Recombination protein RecR.